The primary structure comprises 234 residues: DNA repair protein RecO (234 aa).

Belongs to the RecO family.

Functionally, involved in DNA repair and RecF pathway recombination. The chain is DNA repair protein RecO from Halorhodospira halophila (strain DSM 244 / SL1) (Ectothiorhodospira halophila (strain DSM 244 / SL1)).